The following is a 123-amino-acid chain: Small ribosomal subunit protein uS13c (123 aa).

Residues 90–123 (GKRHRNSLPVRGQRTRTNARSRRGAKKTVTGKKK) form a disordered region. Residues 102–123 (QRTRTNARSRRGAKKTVTGKKK) are compositionally biased toward basic residues.

This sequence belongs to the universal ribosomal protein uS13 family. Part of the 30S ribosomal subunit.

The protein resides in the plastid. It localises to the chloroplast. Located at the top of the head of the 30S subunit, it contacts several helices of the 16S rRNA. The chain is Small ribosomal subunit protein uS13c from Thalassiosira pseudonana (Marine diatom).